The sequence spans 415 residues: Dynein assembly factor with WD repeat domains 1 (415 aa).

WD repeat units lie at residues 90 to 129 (AHILPLTNVALNKAGSCFITGSYDRTCKVWDTASGEELHT), 132 to 174 (GHRN…HTFR), 175 to 214 (GHTAEIVCLSFNPQSTVVATGSMDTTAKLWDIQSGEEVVT), 217 to 256 (GHLAEIISLSFDTSGDRIITGSFDHTVVVWDASTGRKVHT), 259 to 298 (GHCAEISSALFSWDCSLILTGSMDKTCMLWDATSGKCVAT), 301 to 340 (GHDDEILDSCFDYTGKLIATASADGTARVYNATTRKCITK), 343 to 384 (GHEG…QVLE), and 386 to 415 (HTDEIFSCAFNYKGNIVITGSKDNSCRIWR).

It belongs to the WD repeat WDR69 family. In terms of assembly, interacts with IFT46.

The protein resides in the cytoplasm. It localises to the cytoskeleton. The protein localises to the flagellum basal body. Its subcellular location is the flagellum axoneme. Its function is as follows. Required for axonemal dynein assembly and ciliary motility in ciliated organs, including Kupffer's vesicle, during embryogenesis. Facilitates the onset of robust cilia motility during development. In Rattus norvegicus (Rat), this protein is Dynein assembly factor with WD repeat domains 1 (Daw1).